The chain runs to 1284 residues: Kinesin-like protein KIN-4C (1284 aa).

The Kinesin motor domain maps to 12–364 (SVKVVVNIRP…LKYANRARNI (353 aa)). Residue 91–98 (GQTGSGKT) coordinates ATP. 3 coiled-coil regions span residues 407–445 (SAALEELQLLQQKVSLLELKNSELNHELKERELSYEQLA), 561–711 (RDHS…QFRS), and 911–950 (MCKEKEHLICDLKEKVVALNGRIRQLETQVKDLNNQNMLL). 2 disordered regions span residues 1040–1070 (RRQTVSSHLNPNPGSGTTQKSAKSEMASQEK) and 1158–1284 (MSEK…NHLR). The span at 1043 to 1070 (TVSSHLNPNPGSGTTQKSAKSEMASQEK) shows a compositional bias: polar residues. 2 stretches are compositionally biased toward basic and acidic residues: residues 1158–1172 (MSEKEAQETKSRKPL) and 1275–1284 (NANEKENHLR).

Belongs to the TRAFAC class myosin-kinesin ATPase superfamily. Kinesin family. KIN-4 subfamily. Homodimer.

Functionally, microtubule-dependent motor protein involved in the control of the oriented deposition of cellulose microfibrils. In Oryza sativa subsp. japonica (Rice), this protein is Kinesin-like protein KIN-4C.